The sequence spans 1177 residues: Transcription-repair-coupling factor (1177 aa).

The 162-residue stretch at 638–799 folds into the Helicase ATP-binding domain; the sequence is DMERERPMDR…MLGVRDLSVI (162 aa). 651 to 658 serves as a coordination point for ATP; that stretch reads GDVGYGKT. Residues 752–755 carry the DEEQ box motif; sequence DEEQ. Residues 820 to 974 enclose the Helicase C-terminal domain; it reads LVREAIEREL…GFKIAMRDLT (155 aa).

In the N-terminal section; belongs to the UvrB family. The protein in the C-terminal section; belongs to the helicase family. RecG subfamily.

Its subcellular location is the cytoplasm. Its function is as follows. Couples transcription and DNA repair by recognizing RNA polymerase (RNAP) stalled at DNA lesions. Mediates ATP-dependent release of RNAP and its truncated transcript from the DNA, and recruitment of nucleotide excision repair machinery to the damaged site. Probably required to repair non-bulky DNA lesions. The protein is Transcription-repair-coupling factor of Bacillus subtilis (strain 168).